The primary structure comprises 367 residues: Uroporphyrinogen decarboxylase (367 aa).

Residue M1 is modified to N-acetylmethionine. Coproporphyrinogen I-binding residues include R37, A39, R41, R50, D86, Y164, S219, and H339. The coproporphyrinogen III site is built by R37, A39, and R41. 4 residues coordinate coproporphyrinogen III: D86, Y164, S219, and H339.

It belongs to the uroporphyrinogen decarboxylase family. Homodimer.

Its subcellular location is the cytoplasm. The protein resides in the cytosol. It catalyses the reaction uroporphyrinogen III + 4 H(+) = coproporphyrinogen III + 4 CO2. It carries out the reaction uroporphyrinogen I + 4 H(+) = coproporphyrinogen I + 4 CO2. It functions in the pathway porphyrin-containing compound metabolism; protoporphyrin-IX biosynthesis; coproporphyrinogen-III from 5-aminolevulinate: step 4/4. Catalyzes the sequential decarboxylation of the four acetate side chains of uroporphyrinogen to form coproporphyrinogen and participates in the fifth step in the heme biosynthetic pathway. Isomer I or isomer III of uroporphyrinogen may serve as substrate, but only coproporphyrinogen III can ultimately be converted to heme. In vitro also decarboxylates pentacarboxylate porphyrinogen I. This Ovis aries (Sheep) protein is Uroporphyrinogen decarboxylase.